A 372-amino-acid chain; its full sequence is NAD(P)H-quinone oxidoreductase subunit 1 (372 aa).

The next 8 helical transmembrane spans lie at 29 to 49 (WLPF…LVTV), 97 to 117 (LLFT…YLVV), 128 to 148 (LGVA…GLLM), 176 to 196 (LALA…IDIV), 204 to 224 (ILGW…IAVL), 254 to 274 (FALY…LVAV), 308 to 328 (TLGI…AVLL), and 351 to 371 (VALV…FAFG).

It belongs to the complex I subunit 1 family. NDH-1 is composed of at least 11 different subunits.

It localises to the cellular thylakoid membrane. The catalysed reaction is a plastoquinone + NADH + (n+1) H(+)(in) = a plastoquinol + NAD(+) + n H(+)(out). The enzyme catalyses a plastoquinone + NADPH + (n+1) H(+)(in) = a plastoquinol + NADP(+) + n H(+)(out). NDH-1 shuttles electrons from an unknown electron donor, via FMN and iron-sulfur (Fe-S) centers, to quinones in the respiratory and/or the photosynthetic chain. The immediate electron acceptor for the enzyme in this species is believed to be plastoquinone. Couples the redox reaction to proton translocation, and thus conserves the redox energy in a proton gradient. This is NAD(P)H-quinone oxidoreductase subunit 1 from Trichodesmium erythraeum (strain IMS101).